Consider the following 124-residue polypeptide: U33-theraphotoxin-Cg1a (124 aa).

Residues 1–17 (MKFAVAIAFTLLVCVFA) form the signal peptide. 5 disulfides stabilise this stretch: Cys26/Cys37, Cys31/Cys51, Cys36/Cys75, Cys61/Cys83, and Cys77/Cys94. Basic and acidic residues predominate over residues 93–108 (RCQEESGKSDKSKESQ). The disordered stretch occupies residues 93-124 (RCQEESGKSDKSKESQGSDESEESEESKESCG). Residues 109-118 (GSDESEESEE) show a composition bias toward acidic residues.

This sequence belongs to the neurotoxin 32 family. In terms of tissue distribution, expressed by the venom gland.

Its subcellular location is the secreted. The sequence is that of U33-theraphotoxin-Cg1a from Chilobrachys guangxiensis (Chinese earth tiger tarantula).